We begin with the raw amino-acid sequence, 343 residues long: Cytoplasmic tRNA 2-thiolation protein 1 (343 aa).

Belongs to the TtcA family. CTU1/NCS6/ATPBD3 subfamily.

Its subcellular location is the cytoplasm. The protein operates within tRNA modification; 5-methoxycarbonylmethyl-2-thiouridine-tRNA biosynthesis. In terms of biological role, plays a central role in 2-thiolation of mcm(5)S(2)U at tRNA wobble positions of tRNA(Lys), tRNA(Glu) and tRNA(Gln). Directly binds tRNAs and probably acts by catalyzing adenylation of tRNAs, an intermediate required for 2-thiolation. It is unclear whether it acts as a sulfurtransferase that transfers sulfur from thiocarboxylated URM1 onto the uridine of tRNAs at wobble position. The sequence is that of Cytoplasmic tRNA 2-thiolation protein 1 from Drosophila sechellia (Fruit fly).